The primary structure comprises 381 residues: Succinyl-diaminopimelate desuccinylase (381 aa).

H70 is a Zn(2+) binding site. The active site involves D72. D103 contributes to the Zn(2+) binding site. E136 serves as the catalytic Proton acceptor. Positions 137, 165, and 354 each coordinate Zn(2+).

The protein belongs to the peptidase M20A family. DapE subfamily. Homodimer. Zn(2+) is required as a cofactor. The cofactor is Co(2+).

The enzyme catalyses N-succinyl-(2S,6S)-2,6-diaminopimelate + H2O = (2S,6S)-2,6-diaminopimelate + succinate. The protein operates within amino-acid biosynthesis; L-lysine biosynthesis via DAP pathway; LL-2,6-diaminopimelate from (S)-tetrahydrodipicolinate (succinylase route): step 3/3. Functionally, catalyzes the hydrolysis of N-succinyl-L,L-diaminopimelic acid (SDAP), forming succinate and LL-2,6-diaminopimelate (DAP), an intermediate involved in the bacterial biosynthesis of lysine and meso-diaminopimelic acid, an essential component of bacterial cell walls. This chain is Succinyl-diaminopimelate desuccinylase, found in Roseobacter denitrificans (strain ATCC 33942 / OCh 114) (Erythrobacter sp. (strain OCh 114)).